We begin with the raw amino-acid sequence, 170 residues long: Cathelicidin antimicrobial peptide (170 aa).

An N-terminal signal peptide occupies residues 1–30; it reads MKTQRDSPSLGRWSLVLLLLGLVMPLAIVA. Residues 31-131 constitute a propeptide, cathelin-like domain (CLD); sequence QVLSYQEAVL…DISCDKDNRR (101 aa). Cystine bridges form between Cys-86–Cys-97 and Cys-108–Cys-125. Positions 150–162 are active core; that stretch reads FKRIVQRIKDFLQ.

Belongs to the cathelicidin family. In terms of assembly, monomer, homodimer or homotrimer (in vitro). Oligomerizes as tetra- or hexamer in solution (in vitro). In terms of processing, proteolytically cleaved by proteinase PRTN3 into antibacterial peptide LL-37. Proteolytically cleaved by cathepsin CTSG and neutrophil elastase ELANE. Resistant to proteolytic degradation in solution, and when bound to both zwitterionic (mimicking mammalian membranes) and negatively charged membranes (mimicking bacterial membranes). Post-translationally, after secretion onto the skin surface, the CAMP gene product is processed by a serine protease-dependent mechanism into multiple novel antimicrobial peptides distinct from and shorter than cathelicidin LL-37. These peptides show enhanced antimicrobial action, acquiring the ability to kill skin pathogens such as S.aureus, E.coli and C.albicans. These peptides have lost the ability to stimulate CXCL8/IL8 release from keratinocytes. The peptides act synergistically, killing bacteria at lower concentrations when present together, and maintain activity at increased salt condition.

The protein localises to the secreted. It is found in the vesicle. In terms of biological role, antimicrobial protein that is an integral component of the innate immune system. Binds to bacterial lipopolysaccharides (LPS). Acts via neutrophil N-formyl peptide receptors to enhance the release of CXCL2. Postsecretory processing generates multiple cathelicidin antimicrobial peptides with various lengths which act as a topical antimicrobial defense in sweat on skin. The unprocessed precursor form, cathelicidin antimicrobial peptide, inhibits the growth of Gram-negative E.coli and E.aerogenes with efficiencies comparable to that of the mature peptide LL-37 (in vitro). Functionally, antimicrobial peptide that is an integral component of the innate immune system. Binds to bacterial lipopolysaccharides (LPS). Causes membrane permeabilization by forming transmembrane pores (in vitro). Causes lysis of E.coli. Exhibits antimicrobial activity against Gram-negative bacteria such as P.aeruginosa, S.typhimurium, E.aerogenes, E.coli and P.syringae, Gram-positive bacteria such as L.monocytogenes, S.epidermidis, S.pyogenes and S.aureus, as well as vancomycin-resistant enterococci (in vitro). Exhibits antimicrobial activity against methicillin-resistant S.aureus, P.mirabilis, and C.albicans in low-salt media, but not in media containing 100 mM NaCl (in vitro). Forms chiral supramolecular assemblies with quinolone signal (PQS) molecules of P.aeruginosa, which may lead to interference of bacterial quorum signaling and perturbance of bacterial biofilm formation. May form supramolecular fiber-like assemblies on bacterial membranes. Induces cytokine and chemokine producation as well as TNF/TNFA and CSF2/GMCSF production in normal human keratinocytes. Exhibits hemolytic activity against red blood cells. Exhibits antimicrobial activity against E.coli and B.megaterium (in vitro). The chain is Cathelicidin antimicrobial peptide from Nomascus gabriellae (Red-cheeked gibbon).